The following is a 447-amino-acid chain: MQESQETHISNHLDEVVAAVSITHRKKFQNKLLQTALFQPPREKLHLCEEKAKSYSNSHEYKQAVHELVRCVALTRICYGDSHWKLAEAHVNLAQGYLQLKGLSLQAKQHAEKARQILANSIVPPYSENTDVFKFSIELFHTMGRALLSLQKFKEAAENLTKAERLSKELLQCGRIIKEEWIEIEARIRLSFAQVYQGQKKSKEALSHYQAALEYVEISKGETSRECVPILRELAGVEQALGLHDVSINHFLQAHLIILSRSPSQVEAADSAHIVAHAAVASGRHEHHDVAEQYFQESMAHLKDSEGMGRTKFLSIQDEFCHFLQMTGQKERATSILRESLEAKVEAFGDFSPEVAETYRLLGGADLAQGNHSGARKKLKKCLQIQTLLYGPQDKRTLATQQAMGMLSTAPKVASKPRQASKAKVAFCTSIPQDTLLGKARPGTTAD.

TPR repeat units follow at residues 45 to 78 (LHLC…TRIC), 137 to 170 (IELF…SKEL), 186 to 219 (ARIR…VEIS), and 356 to 389 (AETY…QTLL).

In terms of assembly, found Associated with the EvC complex composed of EFCAB7, IQCE, EVC2 and EVC.

The protein resides in the cell projection. Its subcellular location is the cilium. In terms of biological role, participates positively in the ciliary Hedgehog (Hh) signaling. The protein is Tetratricopeptide repeat protein 23 (TTC23) of Homo sapiens (Human).